Reading from the N-terminus, the 368-residue chain is Alanine racemase (368 aa).

K40 serves as the catalytic Proton acceptor; specific for D-alanine. K40 is modified (N6-(pyridoxal phosphate)lysine). Substrate is bound at residue R136. Y263 functions as the Proton acceptor; specific for L-alanine in the catalytic mechanism. M310 lines the substrate pocket.

The protein belongs to the alanine racemase family. Requires pyridoxal 5'-phosphate as cofactor.

It carries out the reaction L-alanine = D-alanine. The protein operates within amino-acid biosynthesis; D-alanine biosynthesis; D-alanine from L-alanine: step 1/1. Functionally, catalyzes the interconversion of L-alanine and D-alanine. May also act on other amino acids. The polypeptide is Alanine racemase (alr) (Streptococcus uberis (strain ATCC BAA-854 / 0140J)).